The primary structure comprises 450 residues: Exodeoxyribonuclease 7 large subunit (450 aa).

The protein belongs to the XseA family. As to quaternary structure, heterooligomer composed of large and small subunits.

The protein resides in the cytoplasm. It carries out the reaction Exonucleolytic cleavage in either 5'- to 3'- or 3'- to 5'-direction to yield nucleoside 5'-phosphates.. Bidirectionally degrades single-stranded DNA into large acid-insoluble oligonucleotides, which are then degraded further into small acid-soluble oligonucleotides. This Listeria monocytogenes serotype 4b (strain CLIP80459) protein is Exodeoxyribonuclease 7 large subunit.